We begin with the raw amino-acid sequence, 412 residues long: Probable cystathionine gamma-synthase 2 (412 aa).

Residues tyrosine 76, arginine 78, glycine 106, methionine 107, tyrosine 131, serine 226, and threonine 228 each contribute to the pyridoxal 5'-phosphate site. Position 229 is an N6-(pyridoxal phosphate)lysine (lysine 229).

The protein belongs to the trans-sulfuration enzymes family. Requires pyridoxal 5'-phosphate as cofactor.

It carries out the reaction O-phospho-L-homoserine + L-cysteine = L,L-cystathionine + phosphate. The enzyme catalyses O-succinyl-L-homoserine + L-cysteine = L,L-cystathionine + succinate + H(+). Its pathway is amino-acid biosynthesis; L-methionine biosynthesis via de novo pathway; L-cystathionine from O-succinyl-L-homoserine: step 1/1. In terms of biological role, catalyzes the first committed step of methionine (Met) biosynthesis. Catalyzes the formation of L-cystathionine from homoserine esters and L-cysteine, via a gamma-replacement reaction. This chain is Probable cystathionine gamma-synthase 2, found in Arabidopsis thaliana (Mouse-ear cress).